Here is a 217-residue protein sequence, read N- to C-terminus: ACIGVFSLVKIYQHEYIFALWLMFITVVIDAVDGTLARLVNIKKILPKIDGALLDNIVDYLNYVITPCFFLLVKPGMLPPEYSVFLIAAVSITSAYQFCQCDAKTPDHFFKGFPCYWNITILYMFIFNTSAATNAIILIILSILIFVPVKYVYPSRLDYLTESRILKILMHICSIIYAVSSICILISYPNTNIICLSLSVAYVGMYLFLSFYRTYYP.

Residues 1–8 (ACIGVFSL) form a helical membrane-spanning segment. Topologically, residues 9-16 (VKIYQHEY) are periplasmic. A helical transmembrane segment spans residues 17–37 (IFALWLMFITVVIDAVDGTLA). Residues 38 to 50 (RLVNIKKILPKID) lie on the Cytoplasmic side of the membrane. The chain crosses the membrane as a helical span at residues 51 to 71 (GALLDNIVDYLNYVITPCFFL). The Periplasmic segment spans residues 72–77 (LVKPGM). The helical transmembrane segment at 78-98 (LPPEYSVFLIAAVSITSAYQF) threads the bilayer. Residues 99 to 107 (CQCDAKTPD) are Cytoplasmic-facing. Residues 108-128 (HFFKGFPCYWNITILYMFIFN) traverse the membrane as a helical segment. Position 129 (Thr-129) is a topological domain, periplasmic. Residues 130 to 149 (SAATNAIILIILSILIFVPV) traverse the membrane as a helical segment. Residues 150–164 (KYVYPSRLDYLTESR) are Cytoplasmic-facing. A helical transmembrane segment spans residues 165–185 (ILKILMHICSIIYAVSSICIL). The Periplasmic segment spans residues 186-191 (ISYPNT). Residues 192-212 (NIICLSLSVAYVGMYLFLSFY) traverse the membrane as a helical segment. At 213-217 (RTYYP) the chain is on the cytoplasmic side.

Belongs to the CDP-alcohol phosphatidyltransferase class-I family. It depends on Mn(2+) as a cofactor.

It localises to the cell inner membrane. It catalyses the reaction a CDP-1,2-diacyl-sn-glycerol + choline = a 1,2-diacyl-sn-glycero-3-phosphocholine + CMP + H(+). In terms of biological role, condenses choline with CDP-diglyceride to produce phosphatidylcholine and CMP. This Legionella bozemanae (Fluoribacter bozemanae) protein is Phosphatidylcholine synthase.